A 333-amino-acid polypeptide reads, in one-letter code: MIDITLPLTDIHRHLDGNIRAQTILDLGRQFNIALPAQTLETLIPHVQVTSTEPDLVSFLTKLDWGVKVLASLDACRRVAFENIEDAARNGLHYVELRFSPGYMAMAHQLPIAGVVEAVIDGVRDGCNTFGVEARLIGIMSRTFGEAACLQELDALLAHREKITALDLAGDELGFPGSLFLSHFNRARDAGWHITVHAGEAAGPESIWQAIRELGAERIGHGVKAVEDRALMDFLAQQRIGIESCLTSNIQTSTVASLADHPLKTFLEHGVLASLNTDDPAVQGVDIIHEYHVAAPAAGLSREQIRQAQINGLEIAFLSDDEKRALREKVAAA.

Zn(2+) contacts are provided by H12 and H14. Substrate contacts are provided by H14, D16, and G170. H197 is a binding site for Zn(2+). The Proton donor role is filled by E200. Residue D278 coordinates Zn(2+). Residue D279 participates in substrate binding.

The protein belongs to the metallo-dependent hydrolases superfamily. Adenosine and AMP deaminases family. Adenosine deaminase subfamily. Requires Zn(2+) as cofactor.

The enzyme catalyses adenosine + H2O + H(+) = inosine + NH4(+). It carries out the reaction 2'-deoxyadenosine + H2O + H(+) = 2'-deoxyinosine + NH4(+). Its function is as follows. Catalyzes the hydrolytic deamination of adenosine and 2-deoxyadenosine. The chain is Adenosine deaminase from Salmonella schwarzengrund (strain CVM19633).